A 246-amino-acid polypeptide reads, in one-letter code: MPSAPAAPDAAASVAPNPPAALPVTVRWLGETPYDACFDAMRAFTDARTPDTDDEIWVVEHPPVYTLGQAGNPAHLLVADSGVPLVKVDRGGQITYHGPGQIVAYLLVDLRRRKLMVRTLVTRIEEAVIETLAAYNLASARKAGAPGIYVESGPHRGAKIAALGLKIRNGCSYHGLSVNVKMDLRPFLAINPCGYAGLETIDMASLGATADWHEVAQTLVRRLIAHLDGATAAAALPQQALEQSND.

Residues 50 to 231 (PDTDDEIWVV…RLIAHLDGAT (182 aa)) form the BPL/LPL catalytic domain. Substrate-binding positions include 90 to 97 (RGGQITYH), 162 to 164 (ALG), and 175 to 177 (GLS). Cys193 acts as the Acyl-thioester intermediate in catalysis.

It belongs to the LipB family.

Its subcellular location is the cytoplasm. It catalyses the reaction octanoyl-[ACP] + L-lysyl-[protein] = N(6)-octanoyl-L-lysyl-[protein] + holo-[ACP] + H(+). It functions in the pathway protein modification; protein lipoylation via endogenous pathway; protein N(6)-(lipoyl)lysine from octanoyl-[acyl-carrier-protein]: step 1/2. Its function is as follows. Catalyzes the transfer of endogenously produced octanoic acid from octanoyl-acyl-carrier-protein onto the lipoyl domains of lipoate-dependent enzymes. Lipoyl-ACP can also act as a substrate although octanoyl-ACP is likely to be the physiological substrate. The polypeptide is Octanoyltransferase (Burkholderia pseudomallei (strain 1106a)).